Here is a 251-residue protein sequence, read N- to C-terminus: Uridylate kinase (251 aa).

ATP is bound at residue 24-27 (KISG). The segment at 32–37 (GDQGFG) is involved in allosteric activation by GTP. UMP is bound at residue G66. 2 residues coordinate ATP: G67 and R71. UMP is bound by residues D86 and 147 to 154 (TGNPYFTT). ATP contacts are provided by N175, Y181, and D184.

This sequence belongs to the UMP kinase family. Homohexamer.

Its subcellular location is the cytoplasm. The catalysed reaction is UMP + ATP = UDP + ADP. It functions in the pathway pyrimidine metabolism; CTP biosynthesis via de novo pathway; UDP from UMP (UMPK route): step 1/1. Its activity is regulated as follows. Allosterically activated by GTP. Inhibited by UTP. In terms of biological role, catalyzes the reversible phosphorylation of UMP to UDP. In Ruegeria pomeroyi (strain ATCC 700808 / DSM 15171 / DSS-3) (Silicibacter pomeroyi), this protein is Uridylate kinase.